Reading from the N-terminus, the 780-residue chain is ATP-dependent 6-phosphofructokinase, muscle type (780 aa).

Thr2 is modified (N-acetylthreonine). An N-terminal catalytic PFK domain 1 region spans residues 2-390; the sequence is THEEHHAAKT…NWEVYKLLAH (389 aa). Residues Gly25, 88–89, and 118–121 each bind ATP; these read RC and GDGS. Asp119 contacts Mg(2+). Phosphoserine is present on Ser133. Substrate-binding positions include 164 to 166, Arg201, 208 to 210, Glu264, Arg292, and 298 to 301; these read SID, MGR, and HVQR. Asp166 functions as the Proton acceptor in the catalytic mechanism. A Phosphoserine modification is found at Ser377. The interval 391–401 is interdomain linker; that stretch reads VRPPVSKSGSH. The segment at 402–780 is C-terminal regulatory PFK domain 2; it reads TVAVMNVGAP…TRKRSGEAAV (379 aa). Beta-D-fructose 2,6-bisphosphate contacts are provided by residues Arg471 and 528–532; that span reads TVSNN. A glycan (O-linked (GlcNAc) serine) is linked at Ser530. Lys557 carries the N6-(2-hydroxyisobutyryl)lysine modification. Beta-D-fructose 2,6-bisphosphate is bound by residues Arg566, 573–575, Glu629, Arg655, and 661–664; these read MGG and HMQQ. Position 667 is a phosphoserine (Ser667). Arg735 is a binding site for beta-D-fructose 2,6-bisphosphate. Ser775 bears the Phosphoserine mark.

It belongs to the phosphofructokinase type A (PFKA) family. ATP-dependent PFK group I subfamily. Eukaryotic two domain clade 'E' sub-subfamily. In terms of assembly, homo- and heterotetramers. Phosphofructokinase (PFK) enzyme functions as a tetramer composed of different combinations of 3 types of subunits, called PFKM (where M stands for Muscle), PFKL (Liver) and PFKP (Platelet). The composition of the PFK tetramer differs according to the tissue type it is present in. In muscles, it is composed of 4 PFKM subunits (also called M4). In the liver, the predominant form is a tetramer of PFKL subunits (L4). In erythrocytes, both PFKM and PFKL subunits randomly tetramerize to form M4, L4 and other combinations (ML3, M2L2, M3L). The kinetic and regulatory properties of the tetrameric enzyme are dependent on the subunit composition, hence can vary across tissues. Interacts (via C-terminus) with HK1 (via N-terminal spermatogenic cell-specific region). The cofactor is Mg(2+). GlcNAcylation decreases enzyme activity.

It localises to the cytoplasm. It catalyses the reaction beta-D-fructose 6-phosphate + ATP = beta-D-fructose 1,6-bisphosphate + ADP + H(+). The protein operates within carbohydrate degradation; glycolysis; D-glyceraldehyde 3-phosphate and glycerone phosphate from D-glucose: step 3/4. Its activity is regulated as follows. Allosterically activated by ADP, AMP, or fructose 2,6-bisphosphate, and allosterically inhibited by ATP or citrate. Catalyzes the phosphorylation of D-fructose 6-phosphate to fructose 1,6-bisphosphate by ATP, the first committing step of glycolysis. In Homo sapiens (Human), this protein is ATP-dependent 6-phosphofructokinase, muscle type (PFKM).